The sequence spans 60 residues: Defensin-like protein 4 (60 aa).

Disulfide bonds link Cys4/Cys56, Cys17/Cys41, Cys26/Cys51, and Cys30/Cys53.

The protein belongs to the DEFL family. Protease inhibitor I18 (RTI/MTI-2) subfamily.

Its subcellular location is the secreted. Its function is as follows. Inhibits trypsin and chymotrypsin. This is Defensin-like protein 4 from Brassica napus (Rape).